We begin with the raw amino-acid sequence, 359 residues long: Protein mab-21-like 2-B (359 aa).

Belongs to the mab-21 family.

The protein localises to the nucleus. The protein resides in the cytoplasm. Its function is as follows. Required for several aspects of embryonic development including normal development of the eye. The chain is Protein mab-21-like 2-B (mab21l2-b) from Xenopus laevis (African clawed frog).